Reading from the N-terminus, the 1225-residue chain is Cytosolic carboxypeptidase 1 (1225 aa).

Residues 366–392 (DDVVDESDDNEDTDAETEAEAENEDSD) are compositionally biased toward acidic residues. The interval 366-398 (DDVVDESDDNEDTDAETEAEAENEDSDQICKND) is disordered. The Peptidase M14 domain occupies 842-1132 (YPYTYSTLKM…KFCVGLLRLK (291 aa)). The Zn(2+) site is built by H914, E917, and H1011. E1096 acts as the Proton donor/acceptor in catalysis. Positions 1181-1193 (YSAESNDDVDPDL) are enriched in acidic residues. A disordered region spans residues 1181-1225 (YSAESNDDVDPDLPENIGDFETSTLEEESFSDSEITRTHMSGQST).

The protein belongs to the peptidase M14 family. Zn(2+) is required as a cofactor.

The protein resides in the cytoplasm. Its subcellular location is the cytosol. It is found in the nucleus. It localises to the mitochondrion. It carries out the reaction (L-glutamyl)(n+1)-gamma-L-glutamyl-L-glutamyl-[protein] + H2O = (L-glutamyl)(n)-gamma-L-glutamyl-L-glutamyl-[protein] + L-glutamate. The enzyme catalyses C-terminal L-alpha-aminoacyl-L-glutamyl-L-glutamyl-[tubulin] + H2O = C-terminal L-alpha-aminoacyl-L-glutamyl-[tubulin] + L-glutamate. Metallocarboxypeptidase that mediates protein deglutamylation of tubulin and non-tubulin target proteins. Catalyzes the removal of polyglutamate side chains present on the gamma-carboxyl group of glutamate residues within the C-terminal tail of alpha- and beta-tubulin. Specifically cleaves tubulin long-side-chains, while it is not able to remove the branching point glutamate. Also catalyzes the removal of polyglutamate residues from the carboxy-terminus of alpha-tubulin as well as non-tubulin proteins. This chain is Cytosolic carboxypeptidase 1 (agtpbp1), found in Xenopus laevis (African clawed frog).